Reading from the N-terminus, the 770-residue chain is Transcription activator AMTR1 (770 aa).

Positions 7 to 34 (CLTCRQRKLKCDEKKPVCRQCAKASREC) form a DNA-binding region, zn(2)-C6 fungal-type.

It localises to the nucleus. Transcription factor that regulates the expression of the gene clusters that mediate the biosynthesis of AM-toxins, host-selective toxins (HSTs) causing Alternaria blotch on apple, a worldwide distributed disease. AM-toxins have two target sites for affecting susceptible apple cells; they cause invagination of the plasma membrane and electrolyte loss and chloroplast disorganization. In Alternaria alternata (Alternaria rot fungus), this protein is Transcription activator AMTR1.